The chain runs to 46 residues: Phospholipase A2 superbin c (46 aa).

Ca(2+) is bound by residues Tyr-28, Gly-30, and Gly-32. Cys-29 and Cys-45 are joined by a disulfide.

Ca(2+) serves as cofactor. Expressed by the venom gland.

It localises to the secreted. The enzyme catalyses a 1,2-diacyl-sn-glycero-3-phosphocholine + H2O = a 1-acyl-sn-glycero-3-phosphocholine + a fatty acid + H(+). In terms of biological role, snake venom phospholipase A2 (PLA2) that inhibits collagen-induced platelet aggregation. In terms of inhibition of platelet aggregation, superbin c is more potent as superbin d. PLA2 catalyzes the calcium-dependent hydrolysis of the 2-acyl groups in 3-sn-phosphoglycerides. This is Phospholipase A2 superbin c from Austrelaps superbus (Lowland copperhead snake).